The sequence spans 293 residues: Probable xyloglucan endotransglucosylase/hydrolase protein 7 (293 aa).

The signal sequence occupies residues 1–29 (MVVSLFSSRNVFYTLSLCLFAALYQPVMS). One can recognise a GH16 domain in the interval 30-223 (RPAKFEDDFR…WSRAPFYAYY (194 aa)). Glu-109 acts as the Nucleophile in catalysis. Glu-113 acts as the Proton donor in catalysis. Glu-113 serves as a coordination point for xyloglucan. The N-linked (GlcNAc...) asparagine glycan is linked to Asn-117. Residues 126-128 (QTN), 136-138 (DRE), 202-203 (DW), and Gly-207 each bind xyloglucan. N-linked (GlcNAc...) asparagine glycosylation occurs at Asn-213. 2 cysteine pairs are disulfide-bonded: Cys-231-Cys-239 and Cys-276-Cys-289. Residue Arg-281 coordinates xyloglucan.

It belongs to the glycosyl hydrolase 16 family. XTH group 1 subfamily. Post-translationally, contains at least one intrachain disulfide bond essential for its enzymatic activity.

The protein localises to the secreted. It localises to the cell wall. The protein resides in the extracellular space. Its subcellular location is the apoplast. It carries out the reaction breaks a beta-(1-&gt;4) bond in the backbone of a xyloglucan and transfers the xyloglucanyl segment on to O-4 of the non-reducing terminal glucose residue of an acceptor, which can be a xyloglucan or an oligosaccharide of xyloglucan.. Its function is as follows. Catalyzes xyloglucan endohydrolysis (XEH) and/or endotransglycosylation (XET). Cleaves and religates xyloglucan polymers, an essential constituent of the primary cell wall, and thereby participates in cell wall construction of growing tissues. In Arabidopsis thaliana (Mouse-ear cress), this protein is Probable xyloglucan endotransglucosylase/hydrolase protein 7 (XTH7).